The primary structure comprises 278 residues: tRNA pseudouridine synthase A (278 aa).

The active-site Nucleophile is Asp-51. Tyr-109 contributes to the substrate binding site.

It belongs to the tRNA pseudouridine synthase TruA family. Homodimer.

It carries out the reaction uridine(38/39/40) in tRNA = pseudouridine(38/39/40) in tRNA. Its function is as follows. Formation of pseudouridine at positions 38, 39 and 40 in the anticodon stem and loop of transfer RNAs. This Paracidovorax citrulli (strain AAC00-1) (Acidovorax citrulli) protein is tRNA pseudouridine synthase A.